The chain runs to 414 residues: Phosphoglycerate kinase (414 aa).

Substrate is bound by residues 20 to 22 (DIN), R37, 60 to 63 (HQSR), R117, and R164. Residues E338 and 364 to 367 (GGHL) each bind ATP.

The protein belongs to the phosphoglycerate kinase family. As to quaternary structure, monomer.

The protein localises to the cytoplasm. It catalyses the reaction (2R)-3-phosphoglycerate + ATP = (2R)-3-phospho-glyceroyl phosphate + ADP. The protein operates within carbohydrate degradation; glycolysis; pyruvate from D-glyceraldehyde 3-phosphate: step 2/5. The sequence is that of Phosphoglycerate kinase from Methanococcus maripaludis (strain DSM 14266 / JCM 13030 / NBRC 101832 / S2 / LL).